The chain runs to 216 residues: Thiopurine S-methyltransferase (216 aa).

Tryptophan 10, leucine 45, glutamate 66, and arginine 123 together coordinate S-adenosyl-L-methionine.

It belongs to the class I-like SAM-binding methyltransferase superfamily. TPMT family.

It is found in the cytoplasm. The enzyme catalyses S-adenosyl-L-methionine + a thiopurine = S-adenosyl-L-homocysteine + a thiopurine S-methylether.. This Pseudomonas entomophila (strain L48) protein is Thiopurine S-methyltransferase.